Here is a 118-residue protein sequence, read N- to C-terminus: Small ribosomal subunit protein uS13 (118 aa).

The segment at 92-118 (RRGLPVRGQRTKTNARTRKGPRKPIKK) is disordered.

Belongs to the universal ribosomal protein uS13 family. In terms of assembly, part of the 30S ribosomal subunit. Forms a loose heterodimer with protein S19. Forms two bridges to the 50S subunit in the 70S ribosome.

Functionally, located at the top of the head of the 30S subunit, it contacts several helices of the 16S rRNA. In the 70S ribosome it contacts the 23S rRNA (bridge B1a) and protein L5 of the 50S subunit (bridge B1b), connecting the 2 subunits; these bridges are implicated in subunit movement. Contacts the tRNAs in the A and P-sites. The sequence is that of Small ribosomal subunit protein uS13 from Yersinia pestis.